We begin with the raw amino-acid sequence, 154 residues long: Keratin-associated protein 9-4 (154 aa).

15 repeat units span residues 8-12 (CCQPT), 13-17 (CCRTT), 18-22 (CCRTT), 37-41 (CCQPS), 42-46 (CCVSS), 51-55 (CCRPT), 56-60 (CCQNT), 61-65 (CCQPT), 70-74 (CCQPS), 75-79 (CCSTP), 80-84 (CCQPT), 85-89 (CCGSS), 129-133 (CCRPA), 134-138 (CCETT), and 148-152 (CCQPF). The interval 8-152 (CCQPTCCRTT…TCVSSCCQPF (145 aa)) is 15 X 5 AA repeats of C-C-[RQVGE]-[SPTN]-[TASPF].

It belongs to the KRTAP type 9 family. Interacts with hair keratins.

In the hair cortex, hair keratin intermediate filaments are embedded in an interfilamentous matrix, consisting of hair keratin-associated proteins (KRTAP), which are essential for the formation of a rigid and resistant hair shaft through their extensive disulfide bond cross-linking with abundant cysteine residues of hair keratins. The matrix proteins include the high-sulfur and high-glycine-tyrosine keratins. This Homo sapiens (Human) protein is Keratin-associated protein 9-4 (KRTAP9-4).